The chain runs to 194 residues: Leucyl/phenylalanyl-tRNA--protein transferase (194 aa).

The protein belongs to the L/F-transferase family.

It is found in the cytoplasm. The enzyme catalyses N-terminal L-lysyl-[protein] + L-leucyl-tRNA(Leu) = N-terminal L-leucyl-L-lysyl-[protein] + tRNA(Leu) + H(+). It carries out the reaction N-terminal L-arginyl-[protein] + L-leucyl-tRNA(Leu) = N-terminal L-leucyl-L-arginyl-[protein] + tRNA(Leu) + H(+). The catalysed reaction is L-phenylalanyl-tRNA(Phe) + an N-terminal L-alpha-aminoacyl-[protein] = an N-terminal L-phenylalanyl-L-alpha-aminoacyl-[protein] + tRNA(Phe). In terms of biological role, functions in the N-end rule pathway of protein degradation where it conjugates Leu, Phe and, less efficiently, Met from aminoacyl-tRNAs to the N-termini of proteins containing an N-terminal arginine or lysine. The sequence is that of Leucyl/phenylalanyl-tRNA--protein transferase from Pelodictyon phaeoclathratiforme (strain DSM 5477 / BU-1).